We begin with the raw amino-acid sequence, 805 residues long: Angiotensin-converting enzyme 2 (805 aa).

The N-terminal stretch at 1 to 17 is a signal peptide; it reads MSGSFWLLLSFAALTAA. At 18 to 740 the chain is on the extracellular side; that stretch reads QSTTEELAKT…LSPPYRPPVT (723 aa). Residues 19–607 form the Peptidase M2 domain; sequence STTEELAKTF…QNRNSFVGWD (589 aa). Residues 30-41 form an interaction with SARS S protein region; the sequence is ETFNYEAQELSY. N-linked (GlcNAc...) asparagine glycosylation occurs at Asn53. Interaction with SARS S protein stretches follow at residues 82–84 and 90–93; these read TYP and DAKI. A disulfide bridge links Cys133 with Cys141. Arg169 serves as a coordination point for chloride. N-linked (GlcNAc...) asparagine glycosylation occurs at Asn216. Arg273 serves as a coordination point for substrate. Residue Asn322 is glycosylated (N-linked (GlcNAc...) asparagine). A disulfide bridge links Cys344 with Cys361. Residue 345–346 participates in substrate binding; the sequence is HP. Residues 353-357 form an interaction with SARS S protein region; that stretch reads KGDFR. Position 374 (His374) interacts with Zn(2+). Glu375 serves as the catalytic Proton acceptor. Zn(2+)-binding residues include His378 and Glu402. Residues Trp477 and Lys481 each contribute to the chloride site. Catalysis depends on His505, which acts as the Proton donor. Tyr515 lines the substrate pocket. A disulfide bridge connects residues Cys530 and Cys542. N-linked (GlcNAc...) asparagine glycosylation is present at Asn546. Residues 614–805 enclose the Collectrin-like domain; the sequence is SDQSIKVRIS…QHADDVQTSF (192 aa). Residues 652–659 are essential for cleavage by ADAM17; sequence REYFSKVK. N-linked (GlcNAc...) asparagine glycosylation is found at Asn660 and Asn690. Residues 697 to 716 form an essential for cleavage by TMPRSS11D and TMPRSS2 region; that stretch reads RSEVEDAIRMSRSRINDAFR. A helical membrane pass occupies residues 741 to 761; that stretch reads IWLIVFGVVMGAIVVGIVLLI. Residues 762 to 805 lie on the Cytoplasmic side of the membrane; it reads VSGIRNRRKNDQAGSEENPYASVDLNKGENNPGFQHADDVQTSF. A disordered region spans residues 771–805; that stretch reads NDQAGSEENPYASVDLNKGENNPGFQHADDVQTSF. Residues 778–786 carry the LIR motif; the sequence is ENPYASVDL. Tyr781 carries the post-translational modification Phosphotyrosine. The Endocytic sorting signal motif lies at 781 to 784; it reads YASV. The SH2-binding signature appears at 781 to 785; sequence YASVD. Ser783 carries the phosphoserine modification. The PTB motif lies at 792 to 795; that stretch reads NPGF. The PDZ-binding motif lies at 803 to 805; that stretch reads TSF.

Belongs to the peptidase M2 family. As to quaternary structure, homodimer. Interacts with the catalytically active form of TMPRSS2. Interacts with SLC6A19; this interaction is essential for expression and function of SLC6A19 in intestine. Interacts with ITGA5:ITGB1. Probably interacts (via endocytic sorting signal motif) with AP2M1; the interaction is inhibited by phosphorylation of Tyr-781. Interacts (via PDZ-binding motif) with NHERF1 (via PDZ domains); the interaction may enhance ACE2 membrane residence. (Microbial infection) Interacts with SARS-CoV S protein. Zn(2+) serves as cofactor. It depends on chloride as a cofactor. Post-translationally, proteolytic cleavage by ADAM17 generates a secreted form. Also cleaved by serine proteases: TMPRSS2, TMPRSS11D and HPN/TMPRSS1. In terms of processing, phosphorylated. Phosphorylation at Tyr-781 probably inhibits interaction with AP2M1 and enables interactions with proteins containing SH2 domains.

The protein resides in the secreted. The protein localises to the cell membrane. It localises to the cytoplasm. Its subcellular location is the cell projection. It is found in the cilium. The protein resides in the apical cell membrane. The enzyme catalyses angiotensin II + H2O = angiotensin-(1-7) + L-phenylalanine. It catalyses the reaction angiotensin I + H2O = angiotensin-(1-9) + L-leucine. Functionally, essential counter-regulatory carboxypeptidase of the renin-angiotensin hormone system that is a critical regulator of blood volume, systemic vascular resistance, and thus cardiovascular homeostasis. Converts angiotensin I to angiotensin 1-9, a nine-amino acid peptide with anti-hypertrophic effects in cardiomyocytes, and angiotensin II to angiotensin 1-7, which then acts as a beneficial vasodilator and anti-proliferation agent, counterbalancing the actions of the vasoconstrictor angiotensin II. Also removes the C-terminal residue from three other vasoactive peptides, neurotensin, kinetensin, and des-Arg bradykinin, but is not active on bradykinin. Also cleaves other biological peptides, such as apelins, casomorphins and dynorphin A. Plays an important role in amino acid transport by acting as binding partner of amino acid transporter SLC6A19 in intestine, regulating trafficking, expression on the cell surface, and its catalytic activity. (Microbial infection) Acts as a receptor for human coronavirus SARS. This chain is Angiotensin-converting enzyme 2 (ACE2), found in Paguma larvata (Masked palm civet).